The chain runs to 196 residues: Small ribosomal subunit protein uS4c (196 aa).

The interval glycine 20–glycine 39 is disordered. Residues methionine 89 to isoleucine 152 enclose the S4 RNA-binding domain.

The protein belongs to the universal ribosomal protein uS4 family. In terms of assembly, part of the 30S ribosomal subunit. Contacts protein S5. The interaction surface between S4 and S5 is involved in control of translational fidelity.

It localises to the plastid. The protein localises to the chloroplast. One of the primary rRNA binding proteins, it binds directly to 16S rRNA where it nucleates assembly of the body of the 30S subunit. Functionally, with S5 and S12 plays an important role in translational accuracy. The chain is Small ribosomal subunit protein uS4c (rps4) from Dendrocalamus giganteus (Giant bamboo).